We begin with the raw amino-acid sequence, 368 residues long: Homoserine O-acetyltransferase (368 aa).

One can recognise an AB hydrolase-1 domain in the interval 43–346 (ILLEHALTGT…EYGHDAFLVE (304 aa)). The active-site Nucleophile is serine 145. Arginine 212 is a binding site for substrate. Catalysis depends on residues aspartate 307 and histidine 340. Aspartate 341 is a substrate binding site.

The protein belongs to the AB hydrolase superfamily. MetX family. In terms of assembly, homodimer.

The protein localises to the cytoplasm. The catalysed reaction is L-homoserine + acetyl-CoA = O-acetyl-L-homoserine + CoA. It participates in amino-acid biosynthesis; L-methionine biosynthesis via de novo pathway; O-acetyl-L-homoserine from L-homoserine: step 1/1. Its function is as follows. Transfers an acetyl group from acetyl-CoA to L-homoserine, forming acetyl-L-homoserine. This Listeria innocua serovar 6a (strain ATCC BAA-680 / CLIP 11262) protein is Homoserine O-acetyltransferase.